We begin with the raw amino-acid sequence, 272 residues long: Probable ribonuclease HI_0526 (272 aa).

An N-terminal signal peptide occupies residues 1–23 (MKKLTSILSLIVLVILAIWQYFT). Residues H148, E195, and H199 contribute to the active site.

It belongs to the RNase T2 family.

The protein is Probable ribonuclease HI_0526 of Haemophilus influenzae (strain ATCC 51907 / DSM 11121 / KW20 / Rd).